The following is a 486-amino-acid chain: Membrane-bound lytic murein transglycosylase F (486 aa).

The signal sequence occupies residues 1 to 29; that stretch reads MFSPTALRPRYAKWLIATGLFLMLSGCVD. Residues 30–267 are non-LT domain; sequence KPNTLERVKE…RLKDRYYGHV (238 aa). The segment at 268-486 is LT domain; sequence DVLGYMGATT…SKPAQEPAPL (219 aa). Residue glutamate 314 is part of the active site.

The protein in the N-terminal section; belongs to the bacterial solute-binding protein 3 family. In the C-terminal section; belongs to the transglycosylase Slt family.

The protein resides in the cell outer membrane. The catalysed reaction is Exolytic cleavage of the (1-&gt;4)-beta-glycosidic linkage between N-acetylmuramic acid (MurNAc) and N-acetylglucosamine (GlcNAc) residues in peptidoglycan, from either the reducing or the non-reducing ends of the peptidoglycan chains, with concomitant formation of a 1,6-anhydrobond in the MurNAc residue.. Murein-degrading enzyme that degrades murein glycan strands and insoluble, high-molecular weight murein sacculi, with the concomitant formation of a 1,6-anhydromuramoyl product. Lytic transglycosylases (LTs) play an integral role in the metabolism of the peptidoglycan (PG) sacculus. Their lytic action creates space within the PG sacculus to allow for its expansion as well as for the insertion of various structures such as secretion systems and flagella. In Pseudomonas fluorescens (strain Pf0-1), this protein is Membrane-bound lytic murein transglycosylase F.